The sequence spans 98 residues: NADH-ubiquinone oxidoreductase chain 4L (98 aa).

The next 3 membrane-spanning stretches (helical) occupy residues 1–21 (MSLVHMNILLAFTMSLTGLLM), 29–49 (ALLCLEGMMLSLFILMTITIL), and 59–79 (TPIILLVFAACEAAVGLALLV).

The protein belongs to the complex I subunit 4L family. In terms of assembly, core subunit of respiratory chain NADH dehydrogenase (Complex I) which is composed of 45 different subunits.

It localises to the mitochondrion inner membrane. It carries out the reaction a ubiquinone + NADH + 5 H(+)(in) = a ubiquinol + NAD(+) + 4 H(+)(out). In terms of biological role, core subunit of the mitochondrial membrane respiratory chain NADH dehydrogenase (Complex I) which catalyzes electron transfer from NADH through the respiratory chain, using ubiquinone as an electron acceptor. Part of the enzyme membrane arm which is embedded in the lipid bilayer and involved in proton translocation. The protein is NADH-ubiquinone oxidoreductase chain 4L (MT-ND4L) of Lipotes vexillifer (Yangtze river dolphin).